A 426-amino-acid chain; its full sequence is 4-hydroxy-3-methylbut-2-en-1-yl diphosphate synthase (flavodoxin) (426 aa).

Residues 1–20 (MLDRDLTLSDDAYESSPVSR) are disordered. [4Fe-4S] cluster is bound by residues Cys320, Cys323, Cys366, and Glu373.

The protein belongs to the IspG family. It depends on [4Fe-4S] cluster as a cofactor.

The catalysed reaction is (2E)-4-hydroxy-3-methylbut-2-enyl diphosphate + oxidized [flavodoxin] + H2O + 2 H(+) = 2-C-methyl-D-erythritol 2,4-cyclic diphosphate + reduced [flavodoxin]. It functions in the pathway isoprenoid biosynthesis; isopentenyl diphosphate biosynthesis via DXP pathway; isopentenyl diphosphate from 1-deoxy-D-xylulose 5-phosphate: step 5/6. Its function is as follows. Converts 2C-methyl-D-erythritol 2,4-cyclodiphosphate (ME-2,4cPP) into 1-hydroxy-2-methyl-2-(E)-butenyl 4-diphosphate. The protein is 4-hydroxy-3-methylbut-2-en-1-yl diphosphate synthase (flavodoxin) of Wolbachia pipientis subsp. Culex pipiens (strain wPip).